The following is a 420-amino-acid chain: Glucose-1-phosphate adenylyltransferase (420 aa).

Residues tyrosine 107, glycine 172, 187-188 (EK), and serine 205 contribute to the alpha-D-glucose 1-phosphate site.

Belongs to the bacterial/plant glucose-1-phosphate adenylyltransferase family. In terms of assembly, homotetramer.

It carries out the reaction alpha-D-glucose 1-phosphate + ATP + H(+) = ADP-alpha-D-glucose + diphosphate. It participates in glycan biosynthesis; glycogen biosynthesis. Its function is as follows. Involved in the biosynthesis of ADP-glucose, a building block required for the elongation reactions to produce glycogen. Catalyzes the reaction between ATP and alpha-D-glucose 1-phosphate (G1P) to produce pyrophosphate and ADP-Glc. This is Glucose-1-phosphate adenylyltransferase from Rhizobium etli (strain CIAT 652).